The primary structure comprises 714 residues: Fatty acid oxidation complex subunit alpha (714 aa).

The interval Met-1–Pro-190 is enoyl-CoA hydratase. A 3-hydroxyacyl-CoA dehydrogenase region spans residues Ala-306 to Gln-714.

This sequence in the N-terminal section; belongs to the enoyl-CoA hydratase/isomerase family. It in the central section; belongs to the 3-hydroxyacyl-CoA dehydrogenase family. In terms of assembly, heterotetramer of two alpha chains (FadJ) and two beta chains (FadI).

Its subcellular location is the cytoplasm. The catalysed reaction is a (3S)-3-hydroxyacyl-CoA = a (2E)-enoyl-CoA + H2O. The enzyme catalyses a 4-saturated-(3S)-3-hydroxyacyl-CoA = a (3E)-enoyl-CoA + H2O. It carries out the reaction a (3S)-3-hydroxyacyl-CoA + NAD(+) = a 3-oxoacyl-CoA + NADH + H(+). It catalyses the reaction (3S)-3-hydroxybutanoyl-CoA = (3R)-3-hydroxybutanoyl-CoA. It functions in the pathway lipid metabolism; fatty acid beta-oxidation. Functionally, catalyzes the formation of a hydroxyacyl-CoA by addition of water on enoyl-CoA. Also exhibits 3-hydroxyacyl-CoA epimerase and 3-hydroxyacyl-CoA dehydrogenase activities. This Escherichia coli O81 (strain ED1a) protein is Fatty acid oxidation complex subunit alpha.